The chain runs to 676 residues: MGVTGILQLPRDRFKRTSFFLWVIILFQRTFSIPLGVIHNSTLQVSDVDKLVCRDKLSSTNQLRSVGLNLEGNGVATDVPSATKRWGFRSGVPPKVVNYEAGEWAENCYNLEIKKPDGSECLPAAPDGIRGFPRCRYVHKVSGTGPCAGDFAFHKEGAFFLYDRLASTVIYRGTTFAEGVVAFLILPQAKKDFFSSHPLREPVNATEDPSSGYYSTTIRYQATGFGTNETEYLFEVDNLTYVQLESRFTPQFLLQLNETRYTSGKRSNTTGKLIWKVNPEIDTTIGEWAFWETKKNLTRKIRSEELSFTAVSNRAKNISGQSPARTSSDPGTNTTTEDHKIMASENSSAMVQVHSQGREAAVSHLTTLATISTSLRPPITKPGPDNSTHNTPVYKLDISEATQVEQHHRRTDNASTTSDTPPATTAAGPLKAENTNTSKGTDLLDPATTTSPQNHSETAGNNNTHHQDTGEESASSGKLGLITNTIAGVAGLITGGRRTRREAIVNAQPKCNPNLHYWTTQDEGAAIGLAWIPYFGPAAEGIYIEGLMHNQDGLICGLRQLANETTQALQLFLRATTELRTFSILNRKAIDFLLQRWGGTCHILGPDCCIEPHDWTKNITDKIDQIIHDFVDKTLPDQGDNDNWWTGWRQWIPAGIGVTGVIIAVIALFCICKFVF.

Positions 1 to 32 are cleaved as a signal peptide; that stretch reads MGVTGILQLPRDRFKRTSFFLWVIILFQRTFS. Topologically, residues 33–650 are extracellular; it reads IPLGVIHNST…NDNWWTGWRQ (618 aa). Asn40 carries an N-linked (GlcNAc...) asparagine; by host glycan. Intrachain disulfides connect Cys53–Cys609, Cys108–Cys135, Cys121–Cys147, Cys511–Cys556, and Cys601–Cys608. The interval 54 to 201 is receptor-binding; it reads RDKLSSTNQL…DFFSSHPLRE (148 aa). 11 N-linked (GlcNAc...) asparagine; by host glycosylation sites follow: Asn204, Asn228, Asn238, Asn257, Asn268, Asn296, Asn317, Asn333, Asn346, Asn386, and Asn413. The interval 305–485 is mucin-like region; it reads ELSFTAVSNR…SGKLGLITNT (181 aa). Residues 314 to 335 are compositionally biased toward polar residues; it reads RAKNISGQSPARTSSDPGTNTT. The tract at residues 314–337 is disordered; it reads RAKNISGQSPARTSSDPGTNTTTE. Disordered regions lie at residues 373 to 392 and 402 to 479; these read TSLR…HNTP and TQVE…SGKL. A compositionally biased stretch (low complexity) spans 414-427; sequence ASTTSDTPPATTAA. N-linked (GlcNAc...) asparagine; by host glycans are attached at residues Asn436, Asn454, and Asn462. Residues 447 to 464 are compositionally biased toward polar residues; that stretch reads ATTTSPQNHSETAGNNNT. The fusion peptide stretch occupies residues 524-539; the sequence is GAAIGLAWIPYFGPAA. Positions 554 to 595 form a coiled coil; it reads LICGLRQLANETTQALQLFLRATTELRTFSILNRKAIDFLLQ. N-linked (GlcNAc...) asparagine; by host glycosylation occurs at Asn563. The stretch at 615-634 forms a coiled coil; it reads WTKNITDKIDQIIHDFVDKT. An N-linked (GlcNAc...) asparagine; by host glycan is attached at Asn618. Residues 651-671 form a helical membrane-spanning segment; that stretch reads WIPAGIGVTGVIIAVIALFCI. 2 S-palmitoyl cysteine; by host lipidation sites follow: Cys670 and Cys672. At 672 to 676 the chain is on the cytoplasmic side; that stretch reads CKFVF.

This sequence belongs to the filoviruses glycoprotein family. In terms of assembly, homotrimer; each monomer consists of a GP1 and a GP2 subunit linked by disulfide bonds. The resulting peplomers (GP1,2) protrude from the virus surface as spikes. Interacts with host integrin alpha-V/ITGAV. Interacts with host CLEC10A. Binds also to host CD209 and CLEC4M/DC-SIGN(R). Interacts with host FOLR1. Interacts with BST2; this interaction inhibits the antiviral effect of BST2 and this allows viral release from infected cells. Interacts with host FCN1; this interaction enhances viral entry. Interacts with host TLR4; this interaction induces cell death in T-lymphocytes or proinflammatory cytokines and SOCS1 production in monocytes. Interacts with host entry receptor NPC1. As to quaternary structure, GP1 and GP2delta are part of GP1,2delta soluble complexes released by ectodomain shedding. The signal peptide region modulates GP's high mannose glycosylation, thereby determining the efficiency of the interactions with DC-SIGN(R). Post-translationally, N-glycosylated. In terms of processing, O-glycosylated in the mucin-like region. Palmitoylation of GP2 is not required for its function. Post-translationally, specific enzymatic cleavages in vivo yield mature proteins. The precursor is processed into GP1 and GP2 by host cell furin in the trans Golgi, and maybe by other host proteases, to yield the mature GP1 and GP2 proteins. The cleavage site corresponds to the furin optimal cleavage sequence [KR]-X-[KR]-R. This cleavage does not seem to be required for function. After the internalization of the virus into cell endosomes, GP1 C-terminus is removed by the endosomal proteases cathepsin B, cathepsin L, or both, leaving a 19-kDa N-terminal fragment which is further digested by cathepsin B. Proteolytic processing of GP1,2 by host ADAM17 can remove the transmembrane anchor of GP2 and leads to shedding of complexes consisting in GP1 and truncated GP2 (GP1,2delta).

It is found in the virion membrane. The protein resides in the host cell membrane. The protein localises to the secreted. In terms of biological role, trimeric GP1,2 complexes form the virion surface spikes and mediate the viral entry processes, with GP1 acting as the receptor-binding subunit and GP2 as the membrane fusion subunit. At later times of infection, down-regulates the expression of various host cell surface molecules that are essential for immune surveillance and cell adhesion. Down-modulates several integrins including ITGA1, ITGA2, ITGA3, ITGA4, ITGA5, ITGA6, ITGAV and ITGB1. This decrease in cell adhesion molecules may lead to cell detachment, contributing to the disruption of blood vessel integrity and hemorrhages developed during infection (cytotoxicity). Interacts with host TLR4 and thereby stimulates the differentiation and activation of monocytes leading to bystander death of T-lymphocytes. Down-regulates as well the function of host natural killer cells. Counteracts the antiviral effect of host BST2/tetherin that restricts release of progeny virions from infected cells. However, cooperates with VP40 and host BST2 to activate canonical NF-kappa-B pathway in a manner dependent on neddylation. Functionally, functions as a decoy for anti-GP1,2 antibodies thereby contributing to viral immune evasion. Interacts and activates host macrophages and dendritic cells inducing up-regulation of cytokine transcription. This effect is mediated throught activation of host TLR4. Its function is as follows. Responsible for binding to the receptor(s) on target cells. Interacts with CD209/DC-SIGN and CLEC4M/DC-SIGNR which act as cofactors for virus entry into dendritic cells (DCs) and endothelial cells. Binding to the macrophage specific lectin CLEC10A also seems to enhance virus infectivity. Interaction with FOLR1/folate receptor alpha may be a cofactor for virus entry in some cell types, although results are contradictory. Members of the Tyro3 receptor tyrosine kinase family also seem to be cell entry factors in filovirus infection. Once attached, the virions are internalized through clathrin-dependent endocytosis and/or macropinocytosis. After internalization of the virus into the endosomes of the host cell, proteolysis of GP1 by two cysteine proteases, CTSB/cathepsin B and CTSL/cathepsin L removes the glycan cap and allows GP1 binding to the host entry receptor NPC1. NPC1-binding, Ca(2+) and acidic pH induce a conformational change of GP2, which unmasks its fusion peptide and permit membranes fusion. Acts as a class I viral fusion protein. Under the current model, the protein has at least 3 conformational states: pre-fusion native state, pre-hairpin intermediate state, and post-fusion hairpin state. During viral and target cell membrane fusion, the coiled coil regions (heptad repeats) assume a trimer-of-hairpins structure, positioning the fusion peptide in close proximity to the C-terminal region of the ectodomain. The formation of this structure appears to drive apposition and subsequent fusion of viral and target cell membranes. Responsible for penetration of the virus into the cell cytoplasm by mediating the fusion of the membrane of the endocytosed virus particle with the endosomal membrane. Low pH in endosomes induces an irreversible conformational change in GP2, releasing the fusion hydrophobic peptide. This chain is Envelope glycoprotein (GP), found in Epomops franqueti (Franquet's epauletted fruit bat).